Consider the following 156-residue polypeptide: Ribosome-binding factor A (156 aa).

Residues 129 to 156 (AGEAQPYRVEEEPGDSEDETPPSSQDQR) form a disordered region.

The protein belongs to the RbfA family. In terms of assembly, monomer. Binds 30S ribosomal subunits, but not 50S ribosomal subunits or 70S ribosomes.

Its subcellular location is the cytoplasm. One of several proteins that assist in the late maturation steps of the functional core of the 30S ribosomal subunit. Associates with free 30S ribosomal subunits (but not with 30S subunits that are part of 70S ribosomes or polysomes). Required for efficient processing of 16S rRNA. May interact with the 5'-terminal helix region of 16S rRNA. The chain is Ribosome-binding factor A from Salinispora arenicola (strain CNS-205).